Reading from the N-terminus, the 190-residue chain is MFNIVTRFQYAANQALTSSIIIAGIVIVSSLLQLYSNNAWSLGTTSISNIKPQVSLKHSFNYGSVNRKPKENSRIQFDLETDLSPLFNWNTKQLFVYLTAEYPGKSDGSSNKITYWDKIITSKEDAVLSLKNQKSKYSVWDIEPSFRQRDAVVKLEWNLQPHIGPLIFGETDEIADFKFAEYVDKKKEQK.

At 1–9 (MFNIVTRFQ) the chain is on the cytoplasmic side. The chain crosses the membrane as a helical; Signal-anchor for type II membrane protein span at residues 10-32 (YAANQALTSSIIIAGIVIVSSLL). Residues 33–190 (QLYSNNAWSL…EYVDKKKEQK (158 aa)) are Lumenal-facing.

Belongs to the SPCS3 family. As to quaternary structure, component of the signal peptidase complex (SPC) composed of a catalytic subunit SEC11 and three accessory subunits SPC1, SPC2 and SPC3. The complex induces a local thinning of the ER membrane which is used to measure the length of the signal peptide (SP) h-region of protein substrates. This ensures the selectivity of the complex towards h-regions shorter than 18-20 amino acids. SPC associates with the translocon complex.

It localises to the endoplasmic reticulum membrane. Its function is as follows. Essential component of the signal peptidase complex (SPC) which catalyzes the cleavage of N-terminal signal sequences from nascent proteins as they are translocated into the lumen of the endoplasmic reticulum. Essential for the SPC catalytic activity, possibly by stabilizing and positioning the active center of the complex close to the lumenal surface. Essential for viability. The chain is Signal peptidase complex subunit 3 (SPC3) from Debaryomyces hansenii (strain ATCC 36239 / CBS 767 / BCRC 21394 / JCM 1990 / NBRC 0083 / IGC 2968) (Yeast).